The primary structure comprises 209 residues: Guanylate kinase (209 aa).

Positions 5-182 constitute a Guanylate kinase-like domain; it reads GLLIVISGPS…AVTKINSIIV (178 aa). An ATP-binding site is contributed by 12–19; the sequence is GPSGAGKG.

Belongs to the guanylate kinase family.

It is found in the cytoplasm. The catalysed reaction is GMP + ATP = GDP + ADP. Its function is as follows. Essential for recycling GMP and indirectly, cGMP. This chain is Guanylate kinase, found in Clostridium acetobutylicum (strain ATCC 824 / DSM 792 / JCM 1419 / IAM 19013 / LMG 5710 / NBRC 13948 / NRRL B-527 / VKM B-1787 / 2291 / W).